A 1132-amino-acid chain; its full sequence is Myosin-binding protein C, fast-type (1132 aa).

The disordered stretch occupies residues 1–59 (MPEPSKAAPKKEAKKKEEKKEEKKEAPPPQEHKDEAPDDVHPPETPDPEGLFLSKPQNV). Positions 9–44 (PKKEAKKKEEKKEEKKEAPPPQEHKDEAPDDVHPPE) are enriched in basic and acidic residues. Ig-like C2-type domains follow at residues 48–149 (PEGL…SIDV), 249–338 (SEAF…VKEP), 339–429 (PVTV…VEEK), 430–530 (QLEV…KQEP), and 531–630 (PKIH…VVDV). Fibronectin type-III domains follow at residues 633–729 (PPQS…IAPT) and 731–826 (EPTH…IREI). The Ig-like C2-type 6 domain maps to 830–923 (PKIRLPRHLR…ATLRLRVVER (94 aa)). Residues 926 to 1022 (PPQAVRVMEV…HNTARIAKEG (97 aa)) form the Fibronectin type-III 3 domain. Positions 1039 to 1132 (PQFLTPLVDR…ECRLDVRVPQ (94 aa)) constitute an Ig-like C2-type 7 domain.

It belongs to the immunoglobulin superfamily. MyBP family.

Its function is as follows. Thick filament-associated protein located in the crossbridge region of vertebrate striated muscle a bands. In vitro it binds MHC, F-actin and native thin filaments, and modifies the activity of actin-activated myosin ATPase. It may modulate muscle contraction or may play a more structural role. The sequence is that of Myosin-binding protein C, fast-type (MYBPC2) from Gallus gallus (Chicken).